A 332-amino-acid polypeptide reads, in one-letter code: GSGNFGVAKLVRDVRTKEHFAVKFIERGHKIDEHVQREIMNHRSLKHPNIIRFKEVVLTPTHLAIVMEYASGGELFQRICNAGRFSEDEGRFFFQQLISGVSYCHSMQVCHRDLKLENTLLDGSVAPRLKICDFGYSKSSVLHSQPKSTVGTPAYIAPEVLSRREYDGKVADVWSCGVTLYVMLVGAYPFEDPDEPRNFRKTITRILSVQYSVPDYVRVSMDCIHLLSRIFVGNPQQRITIPEIKNHPWFLKRLPVEMTDEYQRSMQLADMNTPSQSLEEAMAIIQEAQKPGDNALGVAGQVACLGSMDLDDIDFDIDDIDVESSGDFVCPL.

ATP is bound by residues 1–8 and Lys-23; that span reads GSGNFGVA. The region spanning 1-250 is the Protein kinase domain; that stretch reads GSGNFGVAKL…IPEIKNHPWF (250 aa). Catalysis depends on Asp-113, which acts as the Proton acceptor.

The protein belongs to the protein kinase superfamily. Ser/Thr protein kinase family. Post-translationally, autophosphorylated.

The catalysed reaction is L-seryl-[protein] + ATP = O-phospho-L-seryl-[protein] + ADP + H(+). It catalyses the reaction L-threonyl-[protein] + ATP = O-phospho-L-threonyl-[protein] + ADP + H(+). Its function is as follows. Involved in water-stress responses. The chain is Abscisic acid-inducible protein kinase from Triticum aestivum (Wheat).